A 688-amino-acid chain; its full sequence is Beta-galactosidase BglY (688 aa).

Residue Arg-118 coordinates substrate. Residue Cys-122 participates in Zn(2+) binding. Substrate is bound at residue Asn-156. Residue Glu-157 is the Proton donor of the active site. The Zn(2+) site is built by Cys-162, Cys-164, and Cys-167. The active-site Nucleophile is the Glu-313. Substrate is bound by residues Trp-321 and Glu-361–His-364.

This sequence belongs to the glycosyl hydrolase 42 family.

The enzyme catalyses Hydrolysis of terminal non-reducing beta-D-galactose residues in beta-D-galactosides.. Its activity is regulated as follows. Ca(2+), Mg(2+) and EDTA have little effect on enzyme activity at 1-10 mM. Zn(2+) at 3, 5, 7 or 10 mM inhibits activity by 20%, 30%, 40% and 65%, respectively. Its function is as follows. Hydrolyzes o-nitrophenyl-beta-D-galactopyranoside (ONPG) and p-nitrophenyl-beta-D-fucopyranoside (PNPF), but not p-nitrophenyl-beta-D-glucopyranoside (PNPG), p-nitrophenyl-beta-D-xylopyranoside (PNPX) or p-nitrophenyl-beta-D-arabinopyranoside (PNPA). Also hydrolyzes lactose, including lactose in milk. This is Beta-galactosidase BglY (bglY) from Alicyclobacillus acidocaldarius subsp. acidocaldarius (strain ATCC 27009 / DSM 446 / BCRC 14685 / JCM 5260 / KCTC 1825 / NBRC 15652 / NCIMB 11725 / NRRL B-14509 / 104-IA) (Bacillus acidocaldarius).